A 379-amino-acid chain; its full sequence is Acetylornithine aminotransferase (379 aa).

Pyridoxal 5'-phosphate is bound by residues 93–94 (GA) and F120. Residue R123 coordinates N(2)-acetyl-L-ornithine. A pyridoxal 5'-phosphate-binding site is contributed by 205–208 (DEVQ). At K234 the chain carries N6-(pyridoxal phosphate)lysine. Residue S262 participates in N(2)-acetyl-L-ornithine binding. Residue T263 coordinates pyridoxal 5'-phosphate.

The protein belongs to the class-III pyridoxal-phosphate-dependent aminotransferase family. ArgD subfamily. As to quaternary structure, homodimer. Pyridoxal 5'-phosphate serves as cofactor.

It localises to the cytoplasm. The enzyme catalyses N(2)-acetyl-L-ornithine + 2-oxoglutarate = N-acetyl-L-glutamate 5-semialdehyde + L-glutamate. It functions in the pathway amino-acid biosynthesis; L-arginine biosynthesis; N(2)-acetyl-L-ornithine from L-glutamate: step 4/4. This Streptococcus mutans serotype c (strain ATCC 700610 / UA159) protein is Acetylornithine aminotransferase.